Reading from the N-terminus, the 380-residue chain is MGSKLINVEGGNNQDDNKYNSNNVISINNKVNKNDYFIETNKELKINLNFQNNNIISNIFSNINIYDKISNIFINNKKTYMLKYNNNINEENFFISYFEKKDDNFVPISPWHHIDLKNDDGTYNMIVEITKYNYIKLEIQLREKFNVIKQDKKKGKLRYYHNSIYWNYGALPQTYEYPKHIYQNKSKKNKEALLFTGDNDPLDILDIGSACLKIGQVVPVKILGAFTLIDEGELDWKIIAINKEDKHYEDINSLSDIEKYYPHTLSLLLEWFRSYKMADTKKLNLISKQLYDKKESEDLIMKTHHYYLEFREDVKKLKEEHSKETIKEHDYVNAQNIQFNYDKLNNNDDEPMENNLLEDINITYYKSDSAYKPDLNIWTP.

Positions 198, 203, and 235 each coordinate Mg(2+).

The protein belongs to the PPase family. Requires Mg(2+) as cofactor.

The catalysed reaction is diphosphate + H2O = 2 phosphate + H(+). The chain is Probable inorganic pyrophosphatase from Plasmodium falciparum (isolate 3D7).